The sequence spans 361 residues: Dihydroorotate dehydrogenase (quinone) (361 aa).

FMN is bound by residues 67–71 (AGLDK) and T91. A substrate-binding site is contributed by K71. 116-120 (NRMGF) provides a ligand contact to substrate. The FMN site is built by N145 and N178. A substrate-binding site is contributed by N178. S181 serves as the catalytic Nucleophile. A substrate-binding site is contributed by N183. The FMN site is built by K223 and G251. 252 to 253 (NT) is a binding site for substrate. FMN is bound by residues G273, G302, and 323–324 (YT).

This sequence belongs to the dihydroorotate dehydrogenase family. Type 2 subfamily. In terms of assembly, monomer. The cofactor is FMN.

It is found in the cell membrane. The enzyme catalyses (S)-dihydroorotate + a quinone = orotate + a quinol. The protein operates within pyrimidine metabolism; UMP biosynthesis via de novo pathway; orotate from (S)-dihydroorotate (quinone route): step 1/1. In terms of biological role, catalyzes the conversion of dihydroorotate to orotate with quinone as electron acceptor. In Deinococcus geothermalis (strain DSM 11300 / CIP 105573 / AG-3a), this protein is Dihydroorotate dehydrogenase (quinone).